Consider the following 199-residue polypeptide: Probable thymidylate kinase (199 aa).

7–14 (GLDGSGKT) is an ATP binding site.

This sequence belongs to the thymidylate kinase family.

It carries out the reaction dTMP + ATP = dTDP + ADP. The chain is Probable thymidylate kinase from Halobacterium salinarum (strain ATCC 29341 / DSM 671 / R1).